The chain runs to 316 residues: Metal tolerance protein 8 (316 aa).

At 1–15 (MGPVRHILNERKSRK) the chain is on the cytoplasmic side. A helical transmembrane segment spans residues 16 to 36 (IAAFLLINTAYMFVEFTSGFM). The Vacuolar portion of the chain corresponds to 37–45 (SDSLGLISD). A helical membrane pass occupies residues 46 to 66 (ACHMLFDCAALAIGLYASYIA). Residues 67 to 80 (RLPANGLYNYGRGR) are Cytoplasmic-facing. Residues 81 to 101 (FEVLSGYVNAVFLVLVGALIV) form a helical membrane-spanning segment. At 102 to 116 (LESFERILEPREIST) the chain is on the vacuolar side. A helical membrane pass occupies residues 117 to 137 (SSLLTVSIGGLVVNVIGLVFF). The Cytoplasmic portion of the chain corresponds to 138 to 176 (HEEHHHAHGEAHSCNGGLQSSENHNKSRNRHHIDHNMEG). The segment at 147-166 (EAHSCNGGLQSSENHNKSRN) is disordered. Residues 177–197 (IFLHVLADTMGSVGVVISTLL) traverse the membrane as a helical segment. The Vacuolar portion of the chain corresponds to 198 to 202 (IKYKG). Residues 203 to 223 (WLIADPICSVFISIMIVSSVL) form a helical membrane-spanning segment. The Cytoplasmic segment spans residues 224-316 (PLLRNSAEIL…LTIQIECVKR (93 aa)).

Belongs to the cation diffusion facilitator (CDF) transporter (TC 2.A.4) family. SLC30A subfamily.

It is found in the vacuole membrane. Functionally, involved in sequestration of excess metal in the cytoplasm into vacuoles to maintain metal homeostasis. This Oryza sativa subsp. japonica (Rice) protein is Metal tolerance protein 8 (MTP8).